The primary structure comprises 547 residues: Chaperonin GroEL (547 aa).

ATP contacts are provided by residues 30 to 33 (TLGP), Lys-51, 87 to 91 (DGTTT), Gly-415, and Asp-496.

The protein belongs to the chaperonin (HSP60) family. Forms a cylinder of 14 subunits composed of two heptameric rings stacked back-to-back. Interacts with the co-chaperonin GroES.

It is found in the cytoplasm. It catalyses the reaction ATP + H2O + a folded polypeptide = ADP + phosphate + an unfolded polypeptide.. Functionally, together with its co-chaperonin GroES, plays an essential role in assisting protein folding. The GroEL-GroES system forms a nano-cage that allows encapsulation of the non-native substrate proteins and provides a physical environment optimized to promote and accelerate protein folding. This Actinobacillus pleuropneumoniae serotype 5b (strain L20) protein is Chaperonin GroEL.